Reading from the N-terminus, the 173-residue chain is ATP synthase subunit b (173 aa).

Residues 12-34 form a helical membrane-spanning segment; that stretch reads AFGNLYAIGWSAVNFLVLLALMY.

This sequence belongs to the ATPase B chain family. In terms of assembly, F-type ATPases have 2 components, F(1) - the catalytic core - and F(0) - the membrane proton channel. F(1) has five subunits: alpha(3), beta(3), gamma(1), delta(1), epsilon(1). F(0) has three main subunits: a(1), b(2) and c(10-14). The alpha and beta chains form an alternating ring which encloses part of the gamma chain. F(1) is attached to F(0) by a central stalk formed by the gamma and epsilon chains, while a peripheral stalk is formed by the delta and b chains.

It is found in the cell membrane. Its function is as follows. F(1)F(0) ATP synthase produces ATP from ADP in the presence of a proton or sodium gradient. F-type ATPases consist of two structural domains, F(1) containing the extramembraneous catalytic core and F(0) containing the membrane proton channel, linked together by a central stalk and a peripheral stalk. During catalysis, ATP synthesis in the catalytic domain of F(1) is coupled via a rotary mechanism of the central stalk subunits to proton translocation. In terms of biological role, component of the F(0) channel, it forms part of the peripheral stalk, linking F(1) to F(0). This chain is ATP synthase subunit b, found in Syntrophomonas wolfei subsp. wolfei (strain DSM 2245B / Goettingen).